Consider the following 263-residue polypeptide: Shikimate dehydrogenase (NADP(+)) (263 aa).

Shikimate is bound by residues 21–23 and Thr67; that span reads TLS. The active-site Proton acceptor is Lys71. Glu83 contacts NADP(+). Shikimate is bound by residues Asn92 and Asp103. Residues 126-130 and Leu204 each bind NADP(+); that span reads GAGGA. Tyr206 contributes to the shikimate binding site. Position 227 (Gly227) interacts with NADP(+).

This sequence belongs to the shikimate dehydrogenase family. As to quaternary structure, homodimer.

The enzyme catalyses shikimate + NADP(+) = 3-dehydroshikimate + NADPH + H(+). It functions in the pathway metabolic intermediate biosynthesis; chorismate biosynthesis; chorismate from D-erythrose 4-phosphate and phosphoenolpyruvate: step 4/7. Involved in the biosynthesis of the chorismate, which leads to the biosynthesis of aromatic amino acids. Catalyzes the reversible NADPH linked reduction of 3-dehydroshikimate (DHSA) to yield shikimate (SA). This chain is Shikimate dehydrogenase (NADP(+)), found in Sulfolobus acidocaldarius (strain ATCC 33909 / DSM 639 / JCM 8929 / NBRC 15157 / NCIMB 11770).